Here is a 360-residue protein sequence, read N- to C-terminus: UDP-D-xylose:L-fucose alpha-1,3-D-xylosyltransferase MGP4 (360 aa).

The disordered stretch occupies residues 1–25; it reads MAQQKFLHQRPIQNPFTNPFSSSPL. Residues 1–41 are Cytoplasmic-facing; it reads MAQQKFLHQRPIQNPFTNPFSSSPLSTSSISNRPISLLSRN. Positions 14–25 are enriched in low complexity; sequence NPFTNPFSSSPL. The helical; Signal-anchor for type II membrane protein transmembrane segment at 42 to 62 threads the bilayer; sequence GLLLLLALLVILGVFLPWAGS. Topologically, residues 63–360 are lumenal; sequence PLFPSPNKLS…ASESPLGKLE (298 aa). Residues asparagine 93 and asparagine 168 are each glycosylated (N-linked (GlcNAc...) asparagine). Positions 191–193 match the DXD motif motif; sequence DVD. Residues asparagine 285 and asparagine 310 are each glycosylated (N-linked (GlcNAc...) asparagine).

This sequence belongs to the glycosyltransferase 77 family. Mn(2+) is required as a cofactor. Mg(2+) serves as cofactor. In terms of tissue distribution, widely expressed.

The protein localises to the golgi apparatus membrane. Catalyzes the transfer of D-xylose from UDP-alpha-D-xylose onto L-fucose. Probably involved in the biosynthesis of rhamnogalacturonan II (RG-II) through xylosylation of the internal fucose moiety of the A-chain of RG-II, a structurally complex pectic polysaccharide of the primary cell wall. RG-II is essential for the cell wall integrity of rapidly growing tissues such as roots and pollen tube growth and elongation. This Arabidopsis thaliana (Mouse-ear cress) protein is UDP-D-xylose:L-fucose alpha-1,3-D-xylosyltransferase MGP4.